A 193-amino-acid polypeptide reads, in one-letter code: dTTP/UTP pyrophosphatase (193 aa).

Residue Asp-71 is the Proton acceptor of the active site.

This sequence belongs to the Maf family. YhdE subfamily. The cofactor is a divalent metal cation.

The protein resides in the cytoplasm. It carries out the reaction dTTP + H2O = dTMP + diphosphate + H(+). It catalyses the reaction UTP + H2O = UMP + diphosphate + H(+). In terms of biological role, nucleoside triphosphate pyrophosphatase that hydrolyzes dTTP and UTP. May have a dual role in cell division arrest and in preventing the incorporation of modified nucleotides into cellular nucleic acids. This is dTTP/UTP pyrophosphatase from Dictyoglomus turgidum (strain DSM 6724 / Z-1310).